The sequence spans 602 residues: Aspartate--tRNA(Asp/Asn) ligase (602 aa).

An L-aspartate-binding site is contributed by E176. The tract at residues 200–203 (QQFK) is aspartate. R222 and H452 together coordinate L-aspartate. 222-224 (RDE) lines the ATP pocket. E490 serves as a coordination point for ATP. Residue R497 coordinates L-aspartate. 542–545 (GIDR) provides a ligand contact to ATP.

Belongs to the class-II aminoacyl-tRNA synthetase family. Type 1 subfamily. Homodimer.

The protein localises to the cytoplasm. It carries out the reaction tRNA(Asx) + L-aspartate + ATP = L-aspartyl-tRNA(Asx) + AMP + diphosphate. In terms of biological role, aspartyl-tRNA synthetase with relaxed tRNA specificity since it is able to aspartylate not only its cognate tRNA(Asp) but also tRNA(Asn). Reaction proceeds in two steps: L-aspartate is first activated by ATP to form Asp-AMP and then transferred to the acceptor end of tRNA(Asp/Asn). This is Aspartate--tRNA(Asp/Asn) ligase from Rickettsia africae (strain ESF-5).